The sequence spans 94 residues: Large ribosomal subunit protein bL27 (94 aa).

A propeptide spanning residues 1 to 9 is cleaved from the precursor; the sequence is MLELNLQLF. A disordered region spans residues 12-33; it reads KKGGGSTSNGRDSQAKRLGAKA.

The protein belongs to the bacterial ribosomal protein bL27 family. In terms of processing, the N-terminus is cleaved by ribosomal processing cysteine protease Prp.

The sequence is that of Large ribosomal subunit protein bL27 from Lactococcus lactis subsp. cremoris (strain MG1363).